The sequence spans 187 residues: Putative manganese efflux pump MntP (187 aa).

A run of 6 helical transmembrane segments spans residues 3 to 23 (LSATLLLAFGMSMDAFAASIG), 41 to 61 (LIFGVIEAITPLVGWLLGLLA), 62 to 82 (TQFVLTWNHWIAFVLLVFLGG), 106 to 128 (LLVTTAFATSLDAMAVGVGLAFL), 142 to 162 (ATLIMSTLGMMVGRFIGPLLG), and 167 to 187 (ILGGVVLIGIGCQILWSHFAG).

This sequence belongs to the MntP (TC 9.B.29) family.

The protein localises to the cell inner membrane. Its function is as follows. Probably functions as a manganese efflux pump. This is Putative manganese efflux pump MntP from Cronobacter sakazakii (strain ATCC BAA-894) (Enterobacter sakazakii).